A 259-amino-acid polypeptide reads, in one-letter code: Deoxyribose-phosphate aldolase (259 aa).

Asp102 functions as the Proton donor/acceptor in the catalytic mechanism. The active-site Schiff-base intermediate with acetaldehyde is the Lys167. Catalysis depends on Lys201, which acts as the Proton donor/acceptor.

Belongs to the DeoC/FbaB aldolase family. DeoC type 2 subfamily.

It is found in the cytoplasm. The catalysed reaction is 2-deoxy-D-ribose 5-phosphate = D-glyceraldehyde 3-phosphate + acetaldehyde. It participates in carbohydrate degradation; 2-deoxy-D-ribose 1-phosphate degradation; D-glyceraldehyde 3-phosphate and acetaldehyde from 2-deoxy-alpha-D-ribose 1-phosphate: step 2/2. Functionally, catalyzes a reversible aldol reaction between acetaldehyde and D-glyceraldehyde 3-phosphate to generate 2-deoxy-D-ribose 5-phosphate. The sequence is that of Deoxyribose-phosphate aldolase from Enterobacter sp. (strain 638).